We begin with the raw amino-acid sequence, 208 residues long: Thymidylate kinase (208 aa).

Gly11–Thr18 contributes to the ATP binding site.

The protein belongs to the thymidylate kinase family.

The catalysed reaction is dTMP + ATP = dTDP + ADP. Phosphorylation of dTMP to form dTDP in both de novo and salvage pathways of dTTP synthesis. This is Thymidylate kinase from Hahella chejuensis (strain KCTC 2396).